A 373-amino-acid chain; its full sequence is MPRPIHAVIHQPALANNLDIIRGKAPESRIWAVVKANAYGHGIRRVFAALRGADGFGLLDLNEAVLLRDLGWQGPILLLEGFFQPQDVAVIEQYRLTTAIHCDEQLRMLESARAKGPLAIQLKLNTGMNRLGFHPAAYRTAWERARAMPCVGSIVHMTHFSDADSARGVAHQIEAFDAATANLPGEASLSNSAAVLWHPQAHRAWVRPGIILYGASPTGRDADIAGTGLQPAMSLHSELISVQDLQPGDTVGYGSLFTAERPMRIGVVACGYADGYPRHASGWGEQRAPVLVDGVRTELVGRVSMDMLCVDLTPCPKARVGSPVTLWGQGLPIDEVAQASGTVGYELMCALAPRVPTSVATITASDSAAPAVA.

Lys35 serves as the catalytic Proton acceptor; specific for D-alanine. Residue Lys35 is modified to N6-(pyridoxal phosphate)lysine. Arg130 lines the substrate pocket. Tyr253 functions as the Proton acceptor; specific for L-alanine in the catalytic mechanism. Residue Met305 coordinates substrate.

It belongs to the alanine racemase family. Pyridoxal 5'-phosphate is required as a cofactor.

The enzyme catalyses L-alanine = D-alanine. It functions in the pathway amino-acid biosynthesis; D-alanine biosynthesis; D-alanine from L-alanine: step 1/1. Functionally, catalyzes the interconversion of L-alanine and D-alanine. May also act on other amino acids. This chain is Alanine racemase (alr), found in Cupriavidus necator (strain ATCC 17699 / DSM 428 / KCTC 22496 / NCIMB 10442 / H16 / Stanier 337) (Ralstonia eutropha).